The chain runs to 98 residues: NADH-ubiquinone oxidoreductase chain 4L (98 aa).

Transmembrane regions (helical) follow at residues 1 to 21 (MSLT…GLLM), 29 to 49 (SLLC…MAIL), and 61 to 81 (IILL…LVMV).

This sequence belongs to the complex I subunit 4L family. Core subunit of respiratory chain NADH dehydrogenase (Complex I) which is composed of 45 different subunits.

The protein localises to the mitochondrion inner membrane. It catalyses the reaction a ubiquinone + NADH + 5 H(+)(in) = a ubiquinol + NAD(+) + 4 H(+)(out). In terms of biological role, core subunit of the mitochondrial membrane respiratory chain NADH dehydrogenase (Complex I) which catalyzes electron transfer from NADH through the respiratory chain, using ubiquinone as an electron acceptor. Part of the enzyme membrane arm which is embedded in the lipid bilayer and involved in proton translocation. The protein is NADH-ubiquinone oxidoreductase chain 4L (MT-ND4L) of Vampyressa melissa (Melissa's yellow-eared bat).